Reading from the N-terminus, the 339-residue chain is Dihydroorotate dehydrogenase (quinone) (339 aa).

FMN-binding positions include 62–66 (AGMDK) and Thr86. Position 66 (Lys66) interacts with substrate. A substrate-binding site is contributed by 111 to 115 (NRMGF). Residues Asn139 and Asn172 each contribute to the FMN site. Asn172 contributes to the substrate binding site. Residue Ser175 is the Nucleophile of the active site. Position 177 (Asn177) interacts with substrate. Residues Lys217 and Thr245 each contribute to the FMN site. 246 to 247 (NT) is a substrate binding site. Residues Gly268, Gly297, and 318-319 (YS) each bind FMN.

It belongs to the dihydroorotate dehydrogenase family. Type 2 subfamily. As to quaternary structure, monomer. It depends on FMN as a cofactor.

The protein resides in the cell membrane. The catalysed reaction is (S)-dihydroorotate + a quinone = orotate + a quinol. It functions in the pathway pyrimidine metabolism; UMP biosynthesis via de novo pathway; orotate from (S)-dihydroorotate (quinone route): step 1/1. Functionally, catalyzes the conversion of dihydroorotate to orotate with quinone as electron acceptor. The polypeptide is Dihydroorotate dehydrogenase (quinone) (Shewanella sp. (strain ANA-3)).